The sequence spans 375 residues: MAARPRKNNVSVPNLYPLYSRKVNKVYWRYKHPVTGKFHALGTNEAEAIAIATEANTRLAEQRTRQILAISDRIATSKGKAITTSTWLDRYQAIQDDRLKSGDIRLNTYKQKAKPVSLLRERAGMKLISAVDVRDIAQLLDEYIAAGRPRMAQVVRSVLIDVFKEAQHYGEVPPGYNPALATKQPRRKITRQRLSLEEWKKIFDIADATHRYMGNAMLLALVTGQRLGDISRMKFSDIWDDHLHVIQEKTGSKIAIPLSLRLNAINWSLRDVVARCRDYAVSAYLVHFFRSTSQAERGAQVKANTLTMNFSKARDLARIDWGEGSPATFHEQRSLSERLYKEQGLDTQKLLGHKTQQQTDRYHDDRGKGWSKVAL.

One can recognise a Core-binding (CB) domain in the interval 82-167 (ITTSTWLDRY…VLIDVFKEAQ (86 aa)). In terms of domain architecture, Tyr recombinase spans 189 to 375 (ITRQRLSLEE…RGKGWSKVAL (187 aa)). Catalysis depends on residues Arg226, Lys249, His330, Arg333, and His353. The disordered stretch occupies residues 350–375 (LLGHKTQQQTDRYHDDRGKGWSKVAL). Tyr362 acts as the O-(3'-phospho-DNA)-tyrosine intermediate in catalysis.

The protein belongs to the 'phage' integrase family.

Functionally, integrase from the cryptic lambdoid prophage e14. Integrase is necessary for integration of the phage into the host genome by site-specific recombination. In conjunction with excisionase, integrase is also necessary for excision of the prophage from the host genome. This chain is Prophage integrase IntE (intE), found in Escherichia coli (strain K12).